The chain runs to 58 residues: UPF0391 membrane protein COXBURSA331_A2131 (58 aa).

2 consecutive transmembrane segments (helical) span residues 3–23 and 30–50; these read FWVL…FTGI and IAKI…IAML.

The protein belongs to the UPF0391 family.

Its subcellular location is the cell membrane. In Coxiella burnetii (strain RSA 331 / Henzerling II), this protein is UPF0391 membrane protein COXBURSA331_A2131.